The sequence spans 421 residues: Alpha-1-antitrypsin-related protein (421 aa).

A signal peptide spans 1–21 (MPFSVSWGILLLAGLCCLVPS). Residues Asn56, Asn110, Asn148, and Asn274 are each glycosylated (N-linked (GlcNAc...) asparagine).

The protein belongs to the serpin family. Interacts with CANX and PDIA3. Glycosylated. Expressed in the liver, leukocytes and testis. Also detected in brain, colon, uterus, esophagus, spleen, trachea, kidney and lung.

Its subcellular location is the endoplasmic reticulum. Putative serine protease inhibitor. The chain is Alpha-1-antitrypsin-related protein (SERPINA2) from Homo sapiens (Human).